Consider the following 363-residue polypeptide: UDP-N-acetylglucosamine--N-acetylmuramyl-(pentapeptide) pyrophosphoryl-undecaprenol N-acetylglucosamine transferase (363 aa).

UDP-N-acetyl-alpha-D-glucosamine contacts are provided by residues 12 to 14 (TGG), Asn122, Arg164, Ser191, Ile245, and Gln290.

This sequence belongs to the glycosyltransferase 28 family. MurG subfamily.

The protein resides in the cell membrane. It carries out the reaction di-trans,octa-cis-undecaprenyl diphospho-N-acetyl-alpha-D-muramoyl-L-alanyl-D-glutamyl-meso-2,6-diaminopimeloyl-D-alanyl-D-alanine + UDP-N-acetyl-alpha-D-glucosamine = di-trans,octa-cis-undecaprenyl diphospho-[N-acetyl-alpha-D-glucosaminyl-(1-&gt;4)]-N-acetyl-alpha-D-muramoyl-L-alanyl-D-glutamyl-meso-2,6-diaminopimeloyl-D-alanyl-D-alanine + UDP + H(+). It functions in the pathway cell wall biogenesis; peptidoglycan biosynthesis. Its function is as follows. Cell wall formation. Catalyzes the transfer of a GlcNAc subunit on undecaprenyl-pyrophosphoryl-MurNAc-pentapeptide (lipid intermediate I) to form undecaprenyl-pyrophosphoryl-MurNAc-(pentapeptide)GlcNAc (lipid intermediate II). The protein is UDP-N-acetylglucosamine--N-acetylmuramyl-(pentapeptide) pyrophosphoryl-undecaprenol N-acetylglucosamine transferase of Lawsonia intracellularis (strain PHE/MN1-00).